The chain runs to 450 residues: Glutamyl-tRNA(Gln) amidotransferase subunit A, mitochondrial (450 aa).

Catalysis depends on charge relay system residues lysine 47 and serine 122. The Acyl-ester intermediate role is filled by serine 146.

This sequence belongs to the amidase family. GatA subfamily. As to quaternary structure, subunit of the heterotrimeric GatFAB amidotransferase (AdT) complex, composed of A, B and F subunits.

The protein resides in the mitochondrion. It catalyses the reaction L-glutamyl-tRNA(Gln) + L-glutamine + ATP + H2O = L-glutaminyl-tRNA(Gln) + L-glutamate + ADP + phosphate + H(+). Allows the formation of correctly charged Gln-tRNA(Gln) through the transamidation of misacylated Glu-tRNA(Gln) in the mitochondria. The reaction takes place in the presence of glutamine and ATP through an activated gamma-phospho-Glu-tRNA(Gln). The polypeptide is Glutamyl-tRNA(Gln) amidotransferase subunit A, mitochondrial (Candida albicans (strain SC5314 / ATCC MYA-2876) (Yeast)).